Consider the following 316-residue polypeptide: Bifunctional peptidase and (3S)-lysyl hydroxylase Jmjd7 (316 aa).

Positions 128–307 (VQKQCSNLPT…LKYSYFQLMD (180 aa)) constitute a JmjC domain. 3 residues coordinate Fe cation: histidine 178, aspartate 180, and histidine 277.

Homodimer; disulfide-linked. Interacts with DRG1 and DRG2. Fe(2+) serves as cofactor.

Its subcellular location is the nucleus. The protein localises to the cytoplasm. The enzyme catalyses L-lysyl-[protein] + 2-oxoglutarate + O2 = (3S)-3-hydroxy-L-lysyl-[protein] + succinate + CO2. In terms of biological role, bifunctional enzyme that acts both as an endopeptidase and 2-oxoglutarate-dependent monooxygenase. Endopeptidase that cleaves histones N-terminal tails at the carboxyl side of methylated arginine or lysine residues, to generate 'tailless nucleosomes', which may trigger transcription elongation. Preferentially recognizes and cleaves monomethylated and dimethylated arginine residues of histones H2, H3 and H4. After initial cleavage, continues to digest histones tails via its aminopeptidase activity. Additionally, may play a role in protein biosynthesis by modifying the translation machinery. Acts as a Fe(2+) and 2-oxoglutarate-dependent monooxygenase, catalyzing (S)-stereospecific hydroxylation at C-3 of 'Lys-22' of DRG1 and 'Lys-21' of DRG2 translation factors (TRAFAC), promoting their interaction with ribonucleic acids (RNA). The chain is Bifunctional peptidase and (3S)-lysyl hydroxylase Jmjd7 from Mus musculus (Mouse).